The following is a 217-amino-acid chain: Methylthioribulose-1-phosphate dehydratase (217 aa).

His-106 and His-108 together coordinate Zn(2+).

Belongs to the aldolase class II family. MtnB subfamily. It depends on Zn(2+) as a cofactor.

It catalyses the reaction 5-(methylsulfanyl)-D-ribulose 1-phosphate = 5-methylsulfanyl-2,3-dioxopentyl phosphate + H2O. Its pathway is amino-acid biosynthesis; L-methionine biosynthesis via salvage pathway; L-methionine from S-methyl-5-thio-alpha-D-ribose 1-phosphate: step 2/6. In terms of biological role, catalyzes the dehydration of methylthioribulose-1-phosphate (MTRu-1-P) into 2,3-diketo-5-methylthiopentyl-1-phosphate (DK-MTP-1-P). This is Methylthioribulose-1-phosphate dehydratase from Xanthomonas campestris pv. campestris (strain B100).